Reading from the N-terminus, the 421-residue chain is Heterogeneous nuclear ribonucleoprotein 27C (421 aa).

2 RRM domains span residues 7-88 and 96-173; these read GKLF…RTLQ and YKVF…KAEP. 2 disordered regions span residues 171–191 and 240–373; these read AEPR…GGAY and GTSP…SEYD. Position 177 is a phosphoserine (Ser177). Over residues 240–250 the composition is skewed to polar residues; that stretch reads GTSPQQQQYGY. The span at 264 to 273 shows a compositional bias: pro residues; the sequence is PPGPQGPPPQ. A compositionally biased stretch (polar residues) spans 275-284; the sequence is SNYAGPQQTQ. Residues 293–302 show a composition bias toward low complexity; the sequence is NSTSTGAPSG. Ser366, Ser368, and Ser370 each carry phosphoserine. The residue at position 372 (Tyr372) is a Phosphotyrosine. Ser379 is subject to Phosphoserine. Positions 392–421 are disordered; that stretch reads EGASNYGAGPRSAYGNDSSTQPPYATSQAV. Over residues 406–421 the composition is skewed to polar residues; that stretch reads GNDSSTQPPYATSQAV.

Interacts with sqd; the interaction is RNA-dependent and may be specific for sqd isoform A/sqdA. Interacts with otu; the interaction is RNA-independent.

Its subcellular location is the nucleus. The protein resides in the cytoplasm. This protein is a component of ribonucleosomes. Could be needed to organize a concentration gradient of a dorsalizing morphogen (Dm) originating in the germinal vesicle. Interacts with grk mRNA (via 3' UTR) and involved in its localization to the dorsal anterior region of the oocyte during dorsal-ventral axis determination; may function as a ribonuclear protein complex together with sqd and otu. Required for polytene chromosome dispersal in nurse cells during oogenesis. May be involved in the regulation of splicing. The polypeptide is Heterogeneous nuclear ribonucleoprotein 27C (Drosophila melanogaster (Fruit fly)).